Reading from the N-terminus, the 503-residue chain is Probable protein kinase UbiB (503 aa).

The helical transmembrane segment at 13 to 35 (TFYRYRLAGLCASLMGSGWICAL) threads the bilayer. Residues 120–491 (EFETEPIASA…QQRQSLWLAV (372 aa)) enclose the Protein kinase domain. Residues 126–134 (IASASIAQV) and K148 each bind ATP. Catalysis depends on D283, which acts as the Proton acceptor. A helical transmembrane segment spans residues 485–502 (QSLWLAVIAVVLLLILLL).

This sequence belongs to the ABC1 family. UbiB subfamily.

It is found in the cell inner membrane. Its pathway is cofactor biosynthesis; ubiquinone biosynthesis [regulation]. In terms of biological role, is probably a protein kinase regulator of UbiI activity which is involved in aerobic coenzyme Q (ubiquinone) biosynthesis. This is Probable protein kinase UbiB from Neisseria meningitidis serogroup B (strain ATCC BAA-335 / MC58).